A 155-amino-acid polypeptide reads, in one-letter code: NADPH-dependent 7-cyano-7-deazaguanine reductase (155 aa).

Cys-52 (thioimide intermediate) is an active-site residue. Catalysis depends on Asp-59, which acts as the Proton donor. Residues 74–76 (VES) and 93–94 (HE) contribute to the substrate site.

This sequence belongs to the GTP cyclohydrolase I family. QueF type 1 subfamily.

It is found in the cytoplasm. It catalyses the reaction 7-aminomethyl-7-carbaguanine + 2 NADP(+) = 7-cyano-7-deazaguanine + 2 NADPH + 3 H(+). It functions in the pathway tRNA modification; tRNA-queuosine biosynthesis. In terms of biological role, catalyzes the NADPH-dependent reduction of 7-cyano-7-deazaguanine (preQ0) to 7-aminomethyl-7-deazaguanine (preQ1). In Syntrophobacter fumaroxidans (strain DSM 10017 / MPOB), this protein is NADPH-dependent 7-cyano-7-deazaguanine reductase.